The chain runs to 207 residues: Large ribosomal subunit protein uL4 (207 aa).

A disordered region spans residues 48 to 75 (THAVKNRSAVSGGGRKPWKQKGTGRARA).

This sequence belongs to the universal ribosomal protein uL4 family. Part of the 50S ribosomal subunit.

One of the primary rRNA binding proteins, this protein initially binds near the 5'-end of the 23S rRNA. It is important during the early stages of 50S assembly. It makes multiple contacts with different domains of the 23S rRNA in the assembled 50S subunit and ribosome. In terms of biological role, forms part of the polypeptide exit tunnel. In Leuconostoc citreum (strain KM20), this protein is Large ribosomal subunit protein uL4.